We begin with the raw amino-acid sequence, 370 residues long: Glutamate 5-kinase (370 aa).

Lys-13 contacts ATP. Positions 54, 140, and 152 each coordinate substrate. Residues 172–173 (SD) and 214–220 (SGGMVTK) each bind ATP. One can recognise a PUA domain in the interval 278 to 355 (TGTLVLDAGA…GEIEAILGFR (78 aa)).

Belongs to the glutamate 5-kinase family.

It localises to the cytoplasm. It carries out the reaction L-glutamate + ATP = L-glutamyl 5-phosphate + ADP. The protein operates within amino-acid biosynthesis; L-proline biosynthesis; L-glutamate 5-semialdehyde from L-glutamate: step 1/2. Catalyzes the transfer of a phosphate group to glutamate to form L-glutamate 5-phosphate. This Paramagnetospirillum magneticum (strain ATCC 700264 / AMB-1) (Magnetospirillum magneticum) protein is Glutamate 5-kinase.